The following is a 312-amino-acid chain: tRNA uridine(34) hydroxylase (312 aa).

The Rhodanese domain maps to 130–225; it reads RGDEVVFFDG…YGEQFGNKGL (96 aa). The Cysteine persulfide intermediate role is filled by Cys185.

This sequence belongs to the TrhO family.

The enzyme catalyses uridine(34) in tRNA + AH2 + O2 = 5-hydroxyuridine(34) in tRNA + A + H2O. In terms of biological role, catalyzes oxygen-dependent 5-hydroxyuridine (ho5U) modification at position 34 in tRNAs. The polypeptide is tRNA uridine(34) hydroxylase (Corynebacterium glutamicum (strain ATCC 13032 / DSM 20300 / JCM 1318 / BCRC 11384 / CCUG 27702 / LMG 3730 / NBRC 12168 / NCIMB 10025 / NRRL B-2784 / 534)).